Consider the following 527-residue polypeptide: MKEAVKTVKPKVPAKKRIVTGSKTKKKVFVKKKPPAKKPPDKKPLKKTTKKTVKKVINRPKSIHIPNKDLKIFKWIPTPKKEFTEIETNSWYEHRKFENPNKSPIQTYNKIVPVVPPESIKQQNLANKRKKTNRPIVFISSEKIRIYPTKEQQKILQTWFRLFACMYNSSIDYINSKKVVLESGRINVAATRKVCNKISVRKALKTIRDNLIKSTNPSIMTHIMDEAIGLACSNYKTCLTNYIEGQIKKFDIKPWSISKRRKIIVIEPGYFKGNSFCPTVFPKMKSSKPLIMIDKTVTLQYDSDTRKYILFVPRVTPKYSVNKEKNSCGIDPGLRDFLTVYSENETQSICPIEIVVNTTKNEYKKIDKINEIIKTKPNLNSKRKKKLNRGLRKYHRRVTNKMKDMHYKVSHELVNTFDKICIGKLNVKSILSKANTVLKSALKRKLATLSFYRFTQRLTHMGYKYGTEVVNVNEYLTTKTCSNCGKIKDLGASKIYECESCGMYADRDENAAKNILKVGLKPWYKQK.

Over residues 21–36 the composition is skewed to basic residues; sequence GSKTKKKVFVKKKPPA. The tract at residues 21-50 is disordered; sequence GSKTKKKVFVKKKPPAKKPPDKKPLKKTTK. The Zn(2+) site is built by cysteine 481, cysteine 484, cysteine 498, and cysteine 501.

In the central section; belongs to the transposase 2 family. This sequence in the C-terminal section; belongs to the transposase 35 family.

The protein is TnpB-like protein R854 of Acanthamoeba polyphaga mimivirus (APMV).